Here is a 362-residue protein sequence, read N- to C-terminus: Histidine protein methyltransferase 1 homolog (362 aa).

The disordered stretch occupies residues 18 to 88 (TSLDDGTCVL…EACKHQPSWK (71 aa)). The span at 30–51 (QKGKQDKRQSTERPGLPRDHSW) shows a compositional bias: basic and acidic residues. Residues 52 to 65 (KCSSLGNAASSEDT) show a composition bias toward polar residues. 2 positions are modified to phosphoserine: S62 and S67. A compositionally biased stretch (basic and acidic residues) spans 73–82 (DRSDDPEACK). The residue at position 144 (H144) is a Tele-methylhistidine. S-adenosyl-L-methionine contacts are provided by residues 158-162 (IWECT), G185, and 206-208 (QDY). The short motif at 237 to 243 (PDGKRQR) is the Nuclear localization signal element. S-adenosyl-L-methionine-binding positions include 259 to 261 (GEW) and S283.

It belongs to the methyltransferase superfamily. METTL18 family. As to quaternary structure, interacts with GRWD1 and members of the heat shock protein 90 and 70 families; these proteins may possibly be methylation substrates for the enzyme. Monomethylated at His-144 through automethylation. Automethylation at His-144 positively regulates the methyltransferase activity toward RPL3. Probably methylated on other residues.

The protein resides in the cytoplasm. It is found in the cytosol. Its subcellular location is the nucleus. The protein localises to the nucleolus. It catalyses the reaction L-histidyl-[protein] + S-adenosyl-L-methionine = N(tele)-methyl-L-histidyl-[protein] + S-adenosyl-L-homocysteine + H(+). In terms of biological role, protein-L-histidine N-tele-methyltransferase that specifically monomethylates RPL3, thereby regulating translation elongation. Histidine methylation of RPL3 regulates translation elongation by slowing ribosome traversal on tyrosine codons: slower elongation provides enough time for proper folding of synthesized proteins and prevents cellular aggregation of tyrosine-rich proteins. The polypeptide is Histidine protein methyltransferase 1 homolog (Mus musculus (Mouse)).